The primary structure comprises 70 residues: MSATTAAVPFWRAAGMTYIGYSNICAALVRNCLKEPFKSEAASREKVHFSISKWTDGKQEKPTVRTESDD.

The protein belongs to the eukaryotic ATPase epsilon family. As to quaternary structure, F-type ATPases have 2 components, CF(1) - the catalytic core - and CF(0) - the membrane proton channel. CF(1) has five subunits: alpha(3), beta(3), gamma(1), delta(1), epsilon(1). CF(0) has three main subunits: a, b and c.

It is found in the mitochondrion. The protein localises to the mitochondrion inner membrane. Its function is as follows. Mitochondrial membrane ATP synthase (F(1)F(0) ATP synthase or Complex V) produces ATP from ADP in the presence of a proton gradient across the membrane which is generated by electron transport complexes of the respiratory chain. F-type ATPases consist of two structural domains, F(1) - containing the extramembraneous catalytic core, and F(0) - containing the membrane proton channel, linked together by a central stalk and a peripheral stalk. During catalysis, ATP synthesis in the catalytic domain of F(1) is coupled via a rotary mechanism of the central stalk subunits to proton translocation. Part of the complex F(1) domain and of the central stalk which is part of the complex rotary element. Rotation of the central stalk against the surrounding alpha(3)beta(3) subunits leads to hydrolysis of ATP in three separate catalytic sites on the beta subunits. The polypeptide is ATP synthase subunit epsilon, mitochondrial (Zea mays (Maize)).